A 332-amino-acid chain; its full sequence is uncharacterized protein (332 aa).

Residues 27 to 47 (CAIVFLCVLLILPFLSCCTSL) traverse the membrane as a helical segment.

The protein resides in the membrane. This is an uncharacterized protein from Treponema pallidum (strain Nichols).